A 468-amino-acid polypeptide reads, in one-letter code: Cysteine--tRNA ligase (468 aa).

Residue cysteine 33 participates in Zn(2+) binding. The 'HIGH' region motif lies at 35-45; that stretch reads ATVQGLPHIGH. Zn(2+)-binding residues include cysteine 211, histidine 236, and glutamate 240. The 'KMSKS' region motif lies at 267 to 271; the sequence is KMSKS. Lysine 270 contacts ATP.

It belongs to the class-I aminoacyl-tRNA synthetase family. Monomer. The cofactor is Zn(2+).

It is found in the cytoplasm. The catalysed reaction is tRNA(Cys) + L-cysteine + ATP = L-cysteinyl-tRNA(Cys) + AMP + diphosphate. This Mycolicibacterium paratuberculosis (strain ATCC BAA-968 / K-10) (Mycobacterium paratuberculosis) protein is Cysteine--tRNA ligase.